The sequence spans 506 residues: Galactose/methyl galactoside import ATP-binding protein MglA (506 aa).

ABC transporter domains are found at residues 14–249 (LTMT…VGRE) and 260–506 (TPKE…AKYL). 46–53 (GENGAGKS) contacts ATP.

The protein belongs to the ABC transporter superfamily. Galactose/methyl galactoside importer (TC 3.A.1.2.3) family. The complex is composed of one ATP-binding protein (MglA), two transmembrane proteins (MglC) and a solute-binding protein (MglB).

The protein localises to the cell inner membrane. It carries out the reaction D-galactose(out) + ATP + H2O = D-galactose(in) + ADP + phosphate + H(+). The enzyme catalyses methyl beta-D-galactoside(out) + ATP + H2O = methyl beta-D-galactoside(in) + ADP + phosphate + H(+). Part of the ABC transporter complex MglABC involved in galactose/methyl galactoside import. Responsible for energy coupling to the transport system. The sequence is that of Galactose/methyl galactoside import ATP-binding protein MglA from Pasteurella multocida (strain Pm70).